Consider the following 255-residue polypeptide: Large ribosomal subunit protein uL2 (255 aa).

The interval 201–229 (YAHPHGGGSHQQGGTPVKKNAPPGQKVGF) is disordered.

This sequence belongs to the universal ribosomal protein uL2 family. In terms of assembly, part of the 50S ribosomal subunit. Forms a bridge to the 30S subunit in the 70S ribosome.

Its function is as follows. One of the primary rRNA binding proteins. Required for association of the 30S and 50S subunits to form the 70S ribosome, for tRNA binding and peptide bond formation. It has been suggested to have peptidyltransferase activity; this is somewhat controversial. Makes several contacts with the 16S rRNA in the 70S ribosome. The sequence is that of Large ribosomal subunit protein uL2 from Caldivirga maquilingensis (strain ATCC 700844 / DSM 13496 / JCM 10307 / IC-167).